A 410-amino-acid chain; its full sequence is NIPA-like protein 3 (410 aa).

A disordered region spans residues 1–24 (MDGAHSAGLQLQPLPPTSGATSTS). The next 9 helical transmembrane spans lie at 37–57 (NLIG…ALNL), 80–100 (WWLG…SYAF), 105–125 (LIVP…IIFI), 139–159 (VLSF…VTFA), 175–195 (LVSW…CLLL), 206–226 (IVVI…TVKA), 244–264 (PIFY…ATFL), 275–295 (LIAS…GAIF), and 304–324 (ALHI…VFLI). A Phosphoserine modification is found at serine 376. Residues 389 to 410 (EEHSSRSTPGVPYRVLEHTKKE) are disordered.

Belongs to the NIPA family.

Its subcellular location is the membrane. The polypeptide is NIPA-like protein 3 (Nipal3) (Mus musculus (Mouse)).